The chain runs to 158 residues: Transcription elongation factor GreA (158 aa).

Residues 47-75 (ENSEYDAAKDEQAFVEQRITQVEKMIRNA) adopt a coiled-coil conformation.

It belongs to the GreA/GreB family.

Necessary for efficient RNA polymerase transcription elongation past template-encoded arresting sites. The arresting sites in DNA have the property of trapping a certain fraction of elongating RNA polymerases that pass through, resulting in locked ternary complexes. Cleavage of the nascent transcript by cleavage factors such as GreA or GreB allows the resumption of elongation from the new 3'terminus. GreA releases sequences of 2 to 3 nucleotides. The polypeptide is Transcription elongation factor GreA (Oceanobacillus iheyensis (strain DSM 14371 / CIP 107618 / JCM 11309 / KCTC 3954 / HTE831)).